The primary structure comprises 120 residues: Ribonuclease P protein component (120 aa).

This sequence belongs to the RnpA family. As to quaternary structure, consists of a catalytic RNA component (M1 or rnpB) and a protein subunit.

It catalyses the reaction Endonucleolytic cleavage of RNA, removing 5'-extranucleotides from tRNA precursor.. Functionally, RNaseP catalyzes the removal of the 5'-leader sequence from pre-tRNA to produce the mature 5'-terminus. It can also cleave other RNA substrates such as 4.5S RNA. The protein component plays an auxiliary but essential role in vivo by binding to the 5'-leader sequence and broadening the substrate specificity of the ribozyme. The sequence is that of Ribonuclease P protein component from Bordetella avium (strain 197N).